Consider the following 200-residue polypeptide: NADH-quinone oxidoreductase subunit C (200 aa).

It belongs to the complex I 30 kDa subunit family. In terms of assembly, NDH-1 is composed of 14 different subunits. Subunits NuoB, C, D, E, F, and G constitute the peripheral sector of the complex.

It localises to the cell inner membrane. The enzyme catalyses a quinone + NADH + 5 H(+)(in) = a quinol + NAD(+) + 4 H(+)(out). NDH-1 shuttles electrons from NADH, via FMN and iron-sulfur (Fe-S) centers, to quinones in the respiratory chain. The immediate electron acceptor for the enzyme in this species is believed to be ubiquinone. Couples the redox reaction to proton translocation (for every two electrons transferred, four hydrogen ions are translocated across the cytoplasmic membrane), and thus conserves the redox energy in a proton gradient. This Parvibaculum lavamentivorans (strain DS-1 / DSM 13023 / NCIMB 13966) protein is NADH-quinone oxidoreductase subunit C.